A 446-amino-acid chain; its full sequence is NADH-ubiquinone oxidoreductase chain 4 (446 aa).

Transmembrane regions (helical) follow at residues 4-24 (IIFF…YWMV), 56-76 (MLSY…LLAS), 93-113 (IIIL…FMFY), 114-134 (LFFE…GYQP), 139-159 (AGLY…IGIF), 182-202 (LLYF…LVHL), 218-238 (ILAG…ISFL), 245-265 (YSFV…LVCL), 272-292 (ALIA…LLTM), 297-317 (LCGS…LFCL), 330-350 (MLIN…WFLL), 373-393 (IVSW…FSAA), and 426-446 (LLHW…MLWL).

It belongs to the complex I subunit 4 family.

The protein resides in the mitochondrion membrane. The enzyme catalyses a ubiquinone + NADH + 5 H(+)(in) = a ubiquinol + NAD(+) + 4 H(+)(out). Its function is as follows. Core subunit of the mitochondrial membrane respiratory chain NADH dehydrogenase (Complex I) that is believed to belong to the minimal assembly required for catalysis. Complex I functions in the transfer of electrons from NADH to the respiratory chain. The immediate electron acceptor for the enzyme is believed to be ubiquinone. In Drosophila melanogaster (Fruit fly), this protein is NADH-ubiquinone oxidoreductase chain 4 (mt:ND4).